The chain runs to 2172 residues: Non-reducing polyketide synthase dpfgA (2172 aa).

The interval 74-181 is N-terminal acylcarrier protein transacylase domain (SAT); that stretch reads EWIKCGNSSL…LALCVGALVD (108 aa). Positions 389–783 constitute a Ketosynthase family 3 (KS3) domain; sequence DDSIAIIGVS…GTNAAMLVCQ (395 aa). Catalysis depends on for beta-ketoacyl synthase activity residues C529, H665, and H706. The malonyl-CoA:ACP transacylase (MAT) domain stretch occupies residues 895 to 1197; the sequence is VFAGQTGRQA…SFHSILLQGQ (303 aa). The active-site For acyl/malonyl transferase activity is S981. Positions 1270–1403 are N-terminal hotdog fold; sequence PELVSLAGPT…GTINWQGQGC (134 aa). The PKS/mFAS DH domain maps to 1270 to 1581; the sequence is PELVSLAGPT…LKRIPIRSLQ (312 aa). The segment at 1277–1575 is product template (PT) domain; the sequence is GPTDGETVEF…EIIGASLKRI (299 aa). Residues 1428–1581 form a C-terminal hotdog fold region; it reads SASTVQGLFV…LKRIPIRSLQ (154 aa). 2 disordered regions span residues 1608 to 1631 and 1650 to 1672; these read DSDS…HADF and YPMD…VLSD. A compositionally biased stretch (low complexity) spans 1650-1668; it reads YPMDSSSFSSAQPPSSASS. Residues 1671–1747 form the Carrier domain; it reads SDHDQESTAL…DLYRMVLNHD (77 aa). An O-(pantetheine 4'-phosphoryl)serine modification is found at S1707. A disordered region spans residues 1751 to 1773; it reads DRGSTVLSDKAPKSKSDSSLHGQ. Positions 1975-2155 are methyltransferase (CMeT) domain; sequence EFLHRVLSRL…DAGFIHVDWT (181 aa).

It participates in secondary metabolite biosynthesis; terpenoid biosynthesis. Non-reducing polyketide synthase; part of the gene cluster that mediates the biosynthesis of diterpenoid pyrones. The first step of the pathway is the synthesis of the alpha-pyrone moiety by the polyketide synthase dpfgA via condensation of one acetyl-CoA starter unit with 3 malonyl-CoA units and 2 methylations. The alpha-pyrone is then combined with geranylgeranyl pyrophosphate (GGPP) formed by the GGPP synthase dpfgD through the action of the prenyltransferase dpfgC to yield a linear alpha-pyrone diterpenoid. Subsequent steps in the diterpenoid pyrone biosynthetic pathway involve the decalin core formation, which is initiated by the epoxidation of the C10-C11 olefin by the FAD-dependent oxidoreductase dpfgE, and is followed by a cyclization cascade catalyzed by the terpene cyclase dpfgB. The short chain dehydrogenase/reductase dpfgG then oxidizes the 8S hydroxy group to a ketone and the short chain dehydrogenase/reductase dpfgH reduces the ketone to the 8R hydroxy group to yield higginsianin B. Higginsianin B is further methylated by the methyltransferase dpfgI to produce the intermediate named FDDP B. The cytochrome P450 monooxygenase dfgpJ then catalyzes a three-step oxidation at C-27 to generate a carboxylic acid as well as C-26 hydroxylation. Finally, methyltransferase dpfgK methylates the carboxylic acid generated by dpfgJ, yielding the final diterpenoid pyrones from the pathway which were named FDDP D and FDDP E. This Gibberella zeae (strain ATCC MYA-4620 / CBS 123657 / FGSC 9075 / NRRL 31084 / PH-1) (Wheat head blight fungus) protein is Non-reducing polyketide synthase dpfgA.